The chain runs to 27 residues: Protein YqiM (27 aa).

The chain is Protein YqiM from Escherichia coli (strain K12).